Here is a 156-residue protein sequence, read N- to C-terminus: UPF0266 membrane protein NT01EI_1718 (156 aa).

The next 3 membrane-spanning stretches (helical) occupy residues 6-26, 46-63, and 67-87; these read IALL…EAIM, DSLI…RNIS, and APFT…IFYL.

This sequence belongs to the UPF0266 family.

It is found in the cell inner membrane. This is UPF0266 membrane protein NT01EI_1718 from Edwardsiella ictaluri (strain 93-146).